We begin with the raw amino-acid sequence, 594 residues long: Protein HOTHEAD (594 aa).

Positions 1-19 are cleaved as a signal peptide; it reads MALKLFLFALLLCLPTSLS. FAD is bound at residue 64–91; it reads DYIVIGGGTAGCPLAATLSQNFSVLVLE. His-529 (proton acceptor) is an active-site residue.

This sequence belongs to the GMC oxidoreductase family. FAD serves as cofactor. Expressed in roots, leaves, stems, inflorescences and siliques. Found not only in epidermis but also in all sub-epidermal cell layers.

Its function is as follows. Probable FAD-dependent enzyme. Involved in regulating post-genital organ fusion. Required to limit cellular interactions between contacting epidermal cells during floral development. The chain is Protein HOTHEAD (HTH) from Arabidopsis thaliana (Mouse-ear cress).